The primary structure comprises 132 residues: Small ribosomal subunit protein uS11 (132 aa).

This sequence belongs to the universal ribosomal protein uS11 family. As to quaternary structure, part of the 30S ribosomal subunit. Interacts with proteins S7 and S18. Binds to IF-3.

Its function is as follows. Located on the platform of the 30S subunit, it bridges several disparate RNA helices of the 16S rRNA. Forms part of the Shine-Dalgarno cleft in the 70S ribosome. The chain is Small ribosomal subunit protein uS11 from Clostridioides difficile (strain 630) (Peptoclostridium difficile).